Consider the following 240-residue polypeptide: MQIFPAIDLKNGQCVRLFQGDFSKKTVVNEDPIAQAKAFATDGATYLHIVDLDGALEGRPINLEIIQRMKKAAKIPVQVGGGIRSMAQVDYYLESGIDRVIIGSAALTDPDFLRAAVQKYGAKIVAGIDAKNGFVATRGWLDVSQVSYLDLAKRMEKVGVETIIYTDISRDGTLTGPNLEQMANLKEHVKVSLIASGGVSSRADLEALAQLGLYGAIAGKALYNHDISMSDIVEVEQIAY.

The active-site Proton acceptor is the Asp-8. Asp-129 (proton donor) is an active-site residue.

It belongs to the HisA/HisF family.

It localises to the cytoplasm. It catalyses the reaction 1-(5-phospho-beta-D-ribosyl)-5-[(5-phospho-beta-D-ribosylamino)methylideneamino]imidazole-4-carboxamide = 5-[(5-phospho-1-deoxy-D-ribulos-1-ylimino)methylamino]-1-(5-phospho-beta-D-ribosyl)imidazole-4-carboxamide. It functions in the pathway amino-acid biosynthesis; L-histidine biosynthesis; L-histidine from 5-phospho-alpha-D-ribose 1-diphosphate: step 4/9. In Listeria monocytogenes serotype 4b (strain CLIP80459), this protein is 1-(5-phosphoribosyl)-5-[(5-phosphoribosylamino)methylideneamino] imidazole-4-carboxamide isomerase.